Reading from the N-terminus, the 525-residue chain is Glutamyl-tRNA(Gln) amidotransferase subunit A, mitochondrial (525 aa).

Active-site charge relay system residues include lysine 76 and serine 168. Residue serine 192 is the Acyl-ester intermediate of the active site.

This sequence belongs to the amidase family. GatA subfamily. Subunit of the heterotrimeric GatCAB amidotransferase (AdT) complex, composed of A (QRSL1), B (GATB) and C (GATC) subunits.

It localises to the mitochondrion. The catalysed reaction is L-glutamyl-tRNA(Gln) + L-glutamine + ATP + H2O = L-glutaminyl-tRNA(Gln) + L-glutamate + ADP + phosphate + H(+). Allows the formation of correctly charged Gln-tRNA(Gln) through the transamidation of misacylated Glu-tRNA(Gln) in the mitochondria. The reaction takes place in the presence of glutamine and ATP through an activated gamma-phospho-Glu-tRNA(Gln). This chain is Glutamyl-tRNA(Gln) amidotransferase subunit A, mitochondrial (Qrsl1), found in Rattus norvegicus (Rat).